Here is a 345-residue protein sequence, read N- to C-terminus: Molybdate/tungstate import ATP-binding protein WtpC (345 aa).

The ABC transporter domain maps to 2 to 231; sequence LKVESISKDY…PKSEEVARFL (230 aa). 33-40 serves as a coordination point for ATP; it reads GPSGSGKT. One can recognise a Mop domain in the interval 280–345; sequence KTSARNVFKA…FKASAIHVFP (66 aa).

The protein belongs to the ABC transporter superfamily. Sulfate/tungstate importer (TC 3.A.1.6) family. As to quaternary structure, the complex is composed of two ATP-binding proteins (WtpC), two transmembrane proteins (WtpB) and a solute-binding protein (WtpA).

Its subcellular location is the cell membrane. It catalyses the reaction tungstate(in) + ATP + H2O = tungstate(out) + ADP + phosphate + H(+). In terms of biological role, part of the ABC transporter complex WtpABC involved in molybdate/tungstate import. Responsible for energy coupling to the transport system. In Pyrococcus horikoshii (strain ATCC 700860 / DSM 12428 / JCM 9974 / NBRC 100139 / OT-3), this protein is Molybdate/tungstate import ATP-binding protein WtpC (wtpC).